The primary structure comprises 321 residues: tRNA uridine(34) hydroxylase (321 aa).

The Rhodanese domain occupies 135–233 (DDPLTLVIDT…YLEEVPENES (99 aa)). Cysteine 193 serves as the catalytic Cysteine persulfide intermediate.

It belongs to the TrhO family.

The catalysed reaction is uridine(34) in tRNA + AH2 + O2 = 5-hydroxyuridine(34) in tRNA + A + H2O. Catalyzes oxygen-dependent 5-hydroxyuridine (ho5U) modification at position 34 in tRNAs. The polypeptide is tRNA uridine(34) hydroxylase (Prochlorococcus marinus (strain SARG / CCMP1375 / SS120)).